A 316-amino-acid polypeptide reads, in one-letter code: Methionyl-tRNA formyltransferase (316 aa).

112-115 (SLLP) contacts (6S)-5,6,7,8-tetrahydrofolate.

It belongs to the Fmt family.

It carries out the reaction L-methionyl-tRNA(fMet) + (6R)-10-formyltetrahydrofolate = N-formyl-L-methionyl-tRNA(fMet) + (6S)-5,6,7,8-tetrahydrofolate + H(+). Functionally, attaches a formyl group to the free amino group of methionyl-tRNA(fMet). The formyl group appears to play a dual role in the initiator identity of N-formylmethionyl-tRNA by promoting its recognition by IF2 and preventing the misappropriation of this tRNA by the elongation apparatus. The sequence is that of Methionyl-tRNA formyltransferase from Glaesserella parasuis serovar 5 (strain SH0165) (Haemophilus parasuis).